Consider the following 515-residue polypeptide: Maturase K (515 aa).

This sequence belongs to the intron maturase 2 family. MatK subfamily.

The protein localises to the plastid. It is found in the chloroplast. Usually encoded in the trnK tRNA gene intron. Probably assists in splicing its own and other chloroplast group II introns. The polypeptide is Maturase K (Pinus contorta (Shore pine)).